The chain runs to 372 residues: MFLTNLTLTNYRNYEYETLNFGEGVNVILGENAQGKTNMMEAIYVLAMAKSHRTSNDKDLIRWNEEYAKIEGRAEKRSGSLTLELLISKKGKKARCNHIEQQRLSQYVGHLNVVMFAPEDLNLVKGSPQVRRRFVDMEIGQVSPVYIHDLSQYQKLLQQRNHYLKMMQARERSDEAVLDVLTEQLVLLAAKITLRRRQFLSLLEQWAMPIHYEISRGAEQLCIRYEPSVDVSEKAELSRIVEAYSETFAAMREREVQRGTTLVGPHRDDIAFFVNGKNVQTFGSQGQQRTTALAVKLAELELIFSELGDYPILLLDDVLSELDDFRQTHLLDAIRKKVQTFVTTTSIDGIKHDIIQEAAIYRVHSGSVTAPS.

Residue 30–37 (GENAQGKT) coordinates ATP.

The protein belongs to the RecF family.

The protein localises to the cytoplasm. Its function is as follows. The RecF protein is involved in DNA metabolism; it is required for DNA replication and normal SOS inducibility. RecF binds preferentially to single-stranded, linear DNA. It also seems to bind ATP. The polypeptide is DNA replication and repair protein RecF (Geobacillus kaustophilus (strain HTA426)).